Consider the following 336-residue polypeptide: Immune-associated nucleotide-binding protein 6 (336 aa).

The 209-residue stretch at 33 to 241 (EPVKNVVLVG…FTDTMHRRIQ (209 aa)) folds into the AIG1-type G domain. The tract at residues 42–49 (GRTGNGKS) is G1. Residues 42 to 50 (GRTGNGKSA) and S63 each bind GTP. The segment at 69–73 (GVTTR) is G2. The tract at residues 91–94 (DTPG) is G3. The tract at residues 161–164 (TCGD) is G4. Positions 200–202 (DNR) are G5. Residue N201 coordinates GTP. Positions 237-270 (HRRIQEEAARVKREEKEIEEKNIADEEKAALKKQ) form a coiled coil.

The protein belongs to the TRAFAC class TrmE-Era-EngA-EngB-Septin-like GTPase superfamily. AIG1/Toc34/Toc159-like paraseptin GTPase family. IAN subfamily. In terms of tissue distribution, mostly expressed in pollen. Also detected in lateral roots and radicles.

The protein is Immune-associated nucleotide-binding protein 6 of Arabidopsis thaliana (Mouse-ear cress).